Here is a 149-residue protein sequence, read N- to C-terminus: FAD synthase (149 aa).

Residues threonine 10–phenylalanine 11, histidine 15–histidine 18, aspartate 95, and tyrosine 123 each bind ATP.

The protein belongs to the archaeal FAD synthase family. In terms of assembly, homodimer. Co(2+) serves as cofactor.

It catalyses the reaction FMN + ATP + H(+) = FAD + diphosphate. It participates in cofactor biosynthesis; FAD biosynthesis; FAD from FMN: step 1/1. With respect to regulation, is inhibited by the product PPi. Catalyzes the transfer of the AMP portion of ATP to flavin mononucleotide (FMN) to produce flavin adenine dinucleotide (FAD) coenzyme. To a lesser extent, is also able to utilize other nucleotides such as CTP and GTP as substrates, producing the modified coenzymes, flavin cytosine dinucleotide (FCD) and flavin guanine dinucleotide (FGD), respectively. Does not catalyze the reverse reaction to produce FMN and ATP from FAD and PPi. Does not function as a glycerol-3-phosphate cytidylyltransferase, as previously annotated in the complete genome. This Methanocaldococcus jannaschii (strain ATCC 43067 / DSM 2661 / JAL-1 / JCM 10045 / NBRC 100440) (Methanococcus jannaschii) protein is FAD synthase (ribL).